Here is a 308-residue protein sequence, read N- to C-terminus: Ribosomal RNA small subunit methyltransferase H (308 aa).

S-adenosyl-L-methionine contacts are provided by residues 32–34 (GGH), aspartate 52, phenylalanine 78, aspartate 100, and glutamine 107.

The protein belongs to the methyltransferase superfamily. RsmH family.

Its subcellular location is the cytoplasm. The catalysed reaction is cytidine(1402) in 16S rRNA + S-adenosyl-L-methionine = N(4)-methylcytidine(1402) in 16S rRNA + S-adenosyl-L-homocysteine + H(+). Specifically methylates the N4 position of cytidine in position 1402 (C1402) of 16S rRNA. This Legionella pneumophila (strain Paris) protein is Ribosomal RNA small subunit methyltransferase H.